The sequence spans 115 residues: T cell receptor beta variable 7-2 (115 aa).

An N-terminal signal peptide occupies residues 1–21 (MGTRLLFWVAFCLLGADHTGA). Positions 22–115 (GVSQSPSNKV…SAVYLCASSL (94 aa)) constitute an Ig-like domain. Cysteines 42 and 111 form a disulfide.

As to quaternary structure, alpha-beta TR is a heterodimer composed of an alpha and beta chain; disulfide-linked. The alpha-beta TR is associated with the transmembrane signaling CD3 coreceptor proteins to form the TR-CD3 (TcR or TCR). The assembly of alpha-beta TR heterodimers with CD3 occurs in the endoplasmic reticulum where a single alpha-beta TR heterodimer associates with one CD3D-CD3E heterodimer, one CD3G-CD3E heterodimer and one CD247 homodimer forming a stable octameric structure. CD3D-CD3E and CD3G-CD3E heterodimers preferentially associate with TR alpha and TR beta chains, respectively. The association of the CD247 homodimer is the last step of TcR assembly in the endoplasmic reticulum and is required for transport to the cell surface.

It is found in the cell membrane. Functionally, v region of the variable domain of T cell receptor (TR) beta chain that participates in the antigen recognition. Alpha-beta T cell receptors are antigen specific receptors which are essential to the immune response and are present on the cell surface of T lymphocytes. Recognize peptide-major histocompatibility (MH) (pMH) complexes that are displayed by antigen presenting cells (APC), a prerequisite for efficient T cell adaptive immunity against pathogens. Binding of alpha-beta TR to pMH complex initiates TR-CD3 clustering on the cell surface and intracellular activation of LCK that phosphorylates the ITAM motifs of CD3G, CD3D, CD3E and CD247 enabling the recruitment of ZAP70. In turn ZAP70 phosphorylates LAT, which recruits numerous signaling molecules to form the LAT signalosome. The LAT signalosome propagates signal branching to three major signaling pathways, the calcium, the mitogen-activated protein kinase (MAPK) kinase and the nuclear factor NF-kappa-B (NF-kB) pathways, leading to the mobilization of transcription factors that are critical for gene expression and essential for T cell growth and differentiation. The T cell repertoire is generated in the thymus, by V-(D)-J rearrangement. This repertoire is then shaped by intrathymic selection events to generate a peripheral T cell pool of self-MH restricted, non-autoaggressive T cells. Post-thymic interaction of alpha-beta TR with the pMH complexes shapes TR structural and functional avidity. The protein is T cell receptor beta variable 7-2 of Homo sapiens (Human).